The primary structure comprises 404 residues: MRTWPTPDVPPLPRTGAPAPVLVHDSTTQSLVEAAPGATATLYACGITPYDATHLGHANTYLAFDLLQRAWLDAGKTVVYTSNVTDVDDPLLERATATGVDWRELAREQTELYRTDMTALRMLPPATWTGAVESIPAVVEAVTALLDAGAAYRVDADVYADLSADPGFGRVAGLDDATMRALFAERGGDPDRPGKKHPLDPALWRGEQPGEPSWDGGKLGPGRPGWHIECAVIARDGLGLPFDVQGGGADLLFPHHEMSTSHARLLAGGAARVHVHAGLLAYDGHKMSKSRGNLVFVSRLLAAGTDPMTVRLALLAHHYREEWEWTDVELRTAQRRLDTWTSAILSTHDDGEPADTVLDAVRAALAADLDAPAALAAVDRWAANPGGDAGVVVATVDALLGIEL.

A disordered region spans residues 1–20 (MRTWPTPDVPPLPRTGAPAP). A Zn(2+)-binding site is contributed by C45. L-cysteinyl-5'-AMP contacts are provided by residues 45 to 48 (CGIT), T60, and 83 to 85 (NVT). Residues 47–57 (ITPYDATHLGH) carry the 'HIGH' region motif. Positions 185–190 (ERGGDP) match the 'ERGGDP' region motif. Residues 185-216 (ERGGDPDRPGKKHPLDPALWRGEQPGEPSWDG) are disordered. The span at 186-199 (RGGDPDRPGKKHPL) shows a compositional bias: basic and acidic residues. W226 contributes to the L-cysteinyl-5'-AMP binding site. Position 230 (C230) interacts with Zn(2+). 248-250 (GAD) contacts L-cysteinyl-5'-AMP. H255 provides a ligand contact to Zn(2+). L280 lines the L-cysteinyl-5'-AMP pocket. Residues 286-290 (KMSKS) carry the 'KMSKS' region motif.

Belongs to the class-I aminoacyl-tRNA synthetase family. MshC subfamily. As to quaternary structure, monomer. Zn(2+) is required as a cofactor.

It carries out the reaction 1D-myo-inositol 2-amino-2-deoxy-alpha-D-glucopyranoside + L-cysteine + ATP = 1D-myo-inositol 2-(L-cysteinylamino)-2-deoxy-alpha-D-glucopyranoside + AMP + diphosphate + H(+). Catalyzes the ATP-dependent condensation of GlcN-Ins and L-cysteine to form L-Cys-GlcN-Ins. In Xylanimonas cellulosilytica (strain DSM 15894 / JCM 12276 / CECT 5975 / KCTC 9989 / LMG 20990 / NBRC 107835 / XIL07), this protein is L-cysteine:1D-myo-inositol 2-amino-2-deoxy-alpha-D-glucopyranoside ligase.